A 293-amino-acid polypeptide reads, in one-letter code: Probable endoribonuclease YicC (293 aa).

The protein belongs to the YicC/YloC family. The cofactor is a divalent metal cation.

Its function is as follows. Negatively modulates sporulation, probably in response to nutrient conditions. Effects expression of sporulation regulator spo0A in an indirect manner, possibly via repression of the sinRR' operon. Probably a ssRNA endonuclease. Functionally, might contribute to small RNA (sRNA) regulation. The chain is Probable endoribonuclease YicC from Clostridioides difficile (strain 630) (Peptoclostridium difficile).